Reading from the N-terminus, the 472-residue chain is UDP-N-acetylmuramate--L-alanine ligase (472 aa).

An ATP-binding site is contributed by G121 to T127.

It belongs to the MurCDEF family.

Its subcellular location is the cytoplasm. It carries out the reaction UDP-N-acetyl-alpha-D-muramate + L-alanine + ATP = UDP-N-acetyl-alpha-D-muramoyl-L-alanine + ADP + phosphate + H(+). The protein operates within cell wall biogenesis; peptidoglycan biosynthesis. Functionally, cell wall formation. This is UDP-N-acetylmuramate--L-alanine ligase from Hahella chejuensis (strain KCTC 2396).